The chain runs to 159 residues: Putative pre-16S rRNA nuclease (159 aa).

This sequence belongs to the YqgF nuclease family.

Its subcellular location is the cytoplasm. Its function is as follows. Could be a nuclease involved in processing of the 5'-end of pre-16S rRNA. In Bartonella quintana (strain Toulouse) (Rochalimaea quintana), this protein is Putative pre-16S rRNA nuclease.